The following is a 503-amino-acid chain: Glutamate--tRNA ligase 1 (503 aa).

The 'HIGH' region signature appears at P17–N27. The 'KMSKS' region motif lies at K261–R265. K264 lines the ATP pocket.

The protein belongs to the class-I aminoacyl-tRNA synthetase family. Glutamate--tRNA ligase type 1 subfamily. In terms of assembly, monomer.

It is found in the cytoplasm. The enzyme catalyses tRNA(Glu) + L-glutamate + ATP = L-glutamyl-tRNA(Glu) + AMP + diphosphate. Functionally, catalyzes the attachment of glutamate to tRNA(Glu) in a two-step reaction: glutamate is first activated by ATP to form Glu-AMP and then transferred to the acceptor end of tRNA(Glu). In Levilactobacillus brevis (strain ATCC 367 / BCRC 12310 / CIP 105137 / JCM 1170 / LMG 11437 / NCIMB 947 / NCTC 947) (Lactobacillus brevis), this protein is Glutamate--tRNA ligase 1.